The chain runs to 177 residues: Large ribosomal subunit protein uL6 (177 aa).

This sequence belongs to the universal ribosomal protein uL6 family. In terms of assembly, part of the 50S ribosomal subunit.

In terms of biological role, this protein binds to the 23S rRNA, and is important in its secondary structure. It is located near the subunit interface in the base of the L7/L12 stalk, and near the tRNA binding site of the peptidyltransferase center. This is Large ribosomal subunit protein uL6 from Sodalis glossinidius (strain morsitans).